A 252-amino-acid chain; its full sequence is Thiamine thiazole synthase (252 aa).

NAD(+) is bound by residues Ser35, 54 to 55 (EK), Gly62, Val126, and 152 to 154 (HVD). Residues Asp154 and His169 each coordinate Fe cation. Met217 contributes to the NAD(+) binding site. A glycine-binding site is contributed by Arg227.

It belongs to the THI4 family. Homooctamer; tetramer of dimers. Fe(2+) is required as a cofactor.

It carries out the reaction hydrogen sulfide + glycine + NAD(+) = ADP-5-ethyl-4-methylthiazole-2-carboxylate + nicotinamide + 3 H2O + H(+). It participates in cofactor biosynthesis; thiamine diphosphate biosynthesis. Involved in the biosynthesis of the thiazole moiety of thiamine. Catalyzes the conversion of NAD and glycine to adenosine diphosphate 5-(2-hydroxyethyl)-4-methylthiazole-2-carboxylate (ADT), an adenylated thiazole intermediate, using free sulfide as a source of sulfur. The sequence is that of Thiamine thiazole synthase from Pyrococcus furiosus (strain ATCC 43587 / DSM 3638 / JCM 8422 / Vc1).